We begin with the raw amino-acid sequence, 94 residues long: Co-chaperonin GroES (94 aa).

It belongs to the GroES chaperonin family. Heptamer of 7 subunits arranged in a ring. Interacts with the chaperonin GroEL.

It localises to the cytoplasm. Together with the chaperonin GroEL, plays an essential role in assisting protein folding. The GroEL-GroES system forms a nano-cage that allows encapsulation of the non-native substrate proteins and provides a physical environment optimized to promote and accelerate protein folding. GroES binds to the apical surface of the GroEL ring, thereby capping the opening of the GroEL channel. The chain is Co-chaperonin GroES from Lactococcus lactis subsp. cremoris (strain MG1363).